The chain runs to 252 residues: Mitochondrial intermembrane space import and assembly protein 40 (252 aa).

The N-terminal 31 residues, 1–31 (MYRTISRSSSGLIRQSTARLTRQLSTTRTTP), are a transit peptide targeting the mitochondrion. Over 32-37 (SQYNSK) the chain is Mitochondrial matrix. The chain crosses the membrane as a helical; Signal-anchor for type II membrane protein span at residues 38–54 (LLLGVLGTGALAFGYFS). Residues 55–252 (QQSSLIQNAS…DKVKPNTKSD (198 aa)) lie on the Mitochondrial intermembrane side of the membrane. Positions 90-123 (RQEKVIKENEQKTKKAEDAKTSSESKANVADKKS) are enriched in basic and acidic residues. The tract at residues 90 to 143 (RQEKVIKENEQKTKKAEDAKTSSESKANVADKKSNSQPEGEPEGEGKQEAAFNP) is disordered. 3 disulfide bridges follow: Cys-152–Cys-154, Cys-163–Cys-196, and Cys-173–Cys-186. One can recognise a CHCH domain in the interval 160 to 204 (HGPCGEEFKEAFSCFVFSETEPKGIDCIKKFENMRSCFKRYPEHY). 2 consecutive short sequence motifs (cx9C motif) follow at residues 163-173 (CGEEFKEAFSC) and 186-196 (CIKKFENMRSC). The segment at 230–252 (EPAIEQIEQGIKEDKVKPNTKSD) is disordered. Over residues 239–252 (GIKEDKVKPNTKSD) the composition is skewed to basic and acidic residues.

As to quaternary structure, monomer. Cu(2+) serves as cofactor. It depends on Zn(2+) as a cofactor.

It is found in the mitochondrion inner membrane. Functionally, required for the import and folding of small cysteine-containing proteins (small Tim) in the mitochondrial intermembrane space (IMS). Forms a redox cycle with ERV1 that involves a disulfide relay system. Precursor proteins to be imported into the IMS are translocated in their reduced form into the mitochondria. The oxidized form of MIA40 forms a transient intermolecular disulfide bridge with the reduced precursor protein, resulting in oxidation of the precursor protein that now contains an intramolecular disulfide bond and is able to undergo folding in the IMS. This Candida albicans (strain SC5314 / ATCC MYA-2876) (Yeast) protein is Mitochondrial intermembrane space import and assembly protein 40 (MIA40).